The sequence spans 214 residues: Probable chorismate pyruvate-lyase (214 aa).

Substrate is bound by residues Arg74, Leu112, and Glu173. The segment at 183–214 is disordered; the sequence is AAPENTGAGGTRLPRRIDTHHTPSKQEERPES. Over residues 197-214 the composition is skewed to basic and acidic residues; sequence RRIDTHHTPSKQEERPES.

It belongs to the UbiC family.

Its subcellular location is the cytoplasm. The enzyme catalyses chorismate = 4-hydroxybenzoate + pyruvate. It participates in cofactor biosynthesis; ubiquinone biosynthesis. In terms of biological role, removes the pyruvyl group from chorismate, with concomitant aromatization of the ring, to provide 4-hydroxybenzoate (4HB) for the ubiquinone pathway. The protein is Probable chorismate pyruvate-lyase of Cupriavidus metallidurans (strain ATCC 43123 / DSM 2839 / NBRC 102507 / CH34) (Ralstonia metallidurans).